A 327-amino-acid chain; its full sequence is tRNA uridine(34) hydroxylase (327 aa).

In terms of domain architecture, Rhodanese spans Leu130–Glu224. The Cysteine persulfide intermediate role is filled by Cys184.

This sequence belongs to the TrhO family.

It carries out the reaction uridine(34) in tRNA + AH2 + O2 = 5-hydroxyuridine(34) in tRNA + A + H2O. Catalyzes oxygen-dependent 5-hydroxyuridine (ho5U) modification at position 34 in tRNAs. The chain is tRNA uridine(34) hydroxylase from Streptococcus thermophilus (strain CNRZ 1066).